We begin with the raw amino-acid sequence, 884 residues long: Alanine--tRNA ligase (884 aa).

Positions 565, 569, 674, and 678 each coordinate Zn(2+).

Belongs to the class-II aminoacyl-tRNA synthetase family. Zn(2+) serves as cofactor.

It localises to the cytoplasm. The enzyme catalyses tRNA(Ala) + L-alanine + ATP = L-alanyl-tRNA(Ala) + AMP + diphosphate. Functionally, catalyzes the attachment of alanine to tRNA(Ala) in a two-step reaction: alanine is first activated by ATP to form Ala-AMP and then transferred to the acceptor end of tRNA(Ala). Also edits incorrectly charged Ser-tRNA(Ala) and Gly-tRNA(Ala) via its editing domain. This is Alanine--tRNA ligase from Xanthobacter autotrophicus (strain ATCC BAA-1158 / Py2).